Consider the following 87-residue polypeptide: Virulence protein PagD (87 aa).

A signal peptide spans 1-20; it reads MKHHAFMLWSLLIFSFHVLA. Residues 46 to 87 form a disordered region; the sequence is QPPTNTDKKQARQISSPSCPTTKPMMSAPVNDARKGNTFSRT. Residues 57 to 66 are compositionally biased toward polar residues; it reads RQISSPSCPT.

Its function is as follows. Putative function in virulence. Could be involved in promoting S.typhimurium survival within macrophages. The chain is Virulence protein PagD (pagD) from Salmonella typhimurium (strain LT2 / SGSC1412 / ATCC 700720).